Consider the following 221-residue polypeptide: Large ribosomal subunit protein uL1 (221 aa).

It belongs to the universal ribosomal protein uL1 family. Part of the 50S ribosomal subunit.

Probably involved in E site tRNA release. Binds directly to 23S rRNA. Functionally, protein L1 is also a translational repressor protein, it controls the translation of its operon by binding to its mRNA. This chain is Large ribosomal subunit protein uL1, found in Sulfolobus acidocaldarius (strain ATCC 33909 / DSM 639 / JCM 8929 / NBRC 15157 / NCIMB 11770).